Here is a 110-residue protein sequence, read N- to C-terminus: Iron-sulfur cluster assembly protein CyaY (110 aa).

This sequence belongs to the frataxin family.

Involved in iron-sulfur (Fe-S) cluster assembly. May act as a regulator of Fe-S biogenesis. The chain is Iron-sulfur cluster assembly protein CyaY from Pseudomonas syringae pv. syringae (strain B728a).